Consider the following 260-residue polypeptide: Exosome complex component Rrp4 (260 aa).

The S1 motif domain occupies 59-128 (NDVVIGIVIV…SSMKVELALR (70 aa)). The 59-residue stretch at 136–194 (KTGQIIKVESVKVPRVIGHGGSMISMLKKETNCSIFVGQNGRIWIDGKDEDIELLSKAL) folds into the KH domain.

Belongs to the RRP4 family. In terms of assembly, component of the archaeal exosome complex. Forms a trimer of Rrp4 and/or Csl4 subunits. The trimer associates with a hexameric ring-like arrangement composed of 3 Rrp41-Rrp42 heterodimers.

The protein resides in the cytoplasm. Non-catalytic component of the exosome, which is a complex involved in RNA degradation. Increases the RNA binding and the efficiency of RNA degradation. Confers strong poly(A) specificity to the exosome. This chain is Exosome complex component Rrp4, found in Methanosarcina acetivorans (strain ATCC 35395 / DSM 2834 / JCM 12185 / C2A).